We begin with the raw amino-acid sequence, 162 residues long: ATP synthase subunit b 1 (162 aa).

The helical transmembrane segment at 1 to 21 (MLLTAEFWVAVAFVAFLVIVW) threads the bilayer.

Belongs to the ATPase B chain family. In terms of assembly, F-type ATPases have 2 components, F(1) - the catalytic core - and F(0) - the membrane proton channel. F(1) has five subunits: alpha(3), beta(3), gamma(1), delta(1), epsilon(1). F(0) has three main subunits: a(1), b(2) and c(10-14). The alpha and beta chains form an alternating ring which encloses part of the gamma chain. F(1) is attached to F(0) by a central stalk formed by the gamma and epsilon chains, while a peripheral stalk is formed by the delta and b chains.

The protein localises to the cell inner membrane. Its function is as follows. F(1)F(0) ATP synthase produces ATP from ADP in the presence of a proton or sodium gradient. F-type ATPases consist of two structural domains, F(1) containing the extramembraneous catalytic core and F(0) containing the membrane proton channel, linked together by a central stalk and a peripheral stalk. During catalysis, ATP synthesis in the catalytic domain of F(1) is coupled via a rotary mechanism of the central stalk subunits to proton translocation. Functionally, component of the F(0) channel, it forms part of the peripheral stalk, linking F(1) to F(0). This Methylorubrum populi (strain ATCC BAA-705 / NCIMB 13946 / BJ001) (Methylobacterium populi) protein is ATP synthase subunit b 1.